Reading from the N-terminus, the 98-residue chain is MSDDTGDVIDELFAVIEDRKANLPEDSYTASLFTHEKGENAVLEKLGEETTELILAAKDDDTEELAHESADIVYHLLVLLSMKEMDIDDLRAELAKRR.

This sequence belongs to the PRA-PH family.

It is found in the cytoplasm. It carries out the reaction 1-(5-phospho-beta-D-ribosyl)-ATP + H2O = 1-(5-phospho-beta-D-ribosyl)-5'-AMP + diphosphate + H(+). It functions in the pathway amino-acid biosynthesis; L-histidine biosynthesis; L-histidine from 5-phospho-alpha-D-ribose 1-diphosphate: step 2/9. The polypeptide is Phosphoribosyl-ATP pyrophosphatase (Haloarcula marismortui (strain ATCC 43049 / DSM 3752 / JCM 8966 / VKM B-1809) (Halobacterium marismortui)).